The following is a 215-amino-acid chain: V-type ATP synthase subunit D (215 aa).

This sequence belongs to the V-ATPase D subunit family.

Functionally, produces ATP from ADP in the presence of a proton gradient across the membrane. This is V-type ATP synthase subunit D from Anaeromyxobacter sp. (strain Fw109-5).